The following is a 116-amino-acid chain: Ribosome-binding factor A (116 aa).

It belongs to the RbfA family. Monomer. Binds 30S ribosomal subunits, but not 50S ribosomal subunits or 70S ribosomes.

It localises to the cytoplasm. Functionally, one of several proteins that assist in the late maturation steps of the functional core of the 30S ribosomal subunit. Associates with free 30S ribosomal subunits (but not with 30S subunits that are part of 70S ribosomes or polysomes). Required for efficient processing of 16S rRNA. May interact with the 5'-terminal helix region of 16S rRNA. The polypeptide is Ribosome-binding factor A (Levilactobacillus brevis (strain ATCC 367 / BCRC 12310 / CIP 105137 / JCM 1170 / LMG 11437 / NCIMB 947 / NCTC 947) (Lactobacillus brevis)).